Consider the following 288-residue polypeptide: Putative alkaline ceramidase dcd3A (288 aa).

Residue N23 is glycosylated (N-linked (GlcNAc...) asparagine). The next 7 membrane-spanning stretches (helical) occupy residues 41–61 (IISL…GTGV), 78–98 (VILS…YHAT), 105–125 (LFDE…MVTV), 146–166 (HLLP…ILVI), 172–192 (ILQV…IYLI), 206–226 (SYLY…WVVE), and 240–260 (LHAF…QFLI).

This sequence belongs to the alkaline ceramidase family.

It localises to the membrane. The sequence is that of Putative alkaline ceramidase dcd3A (dcd3A) from Dictyostelium discoideum (Social amoeba).